Reading from the N-terminus, the 415-residue chain is Plasminogen activator inhibitor 2, macrophage (415 aa).

Asn23, Asn75, Asn261, and Asn339 each carry an N-linked (GlcNAc...) asparagine glycan.

This sequence belongs to the serpin family. Ov-serpin subfamily. In terms of assembly, interacts with PSMB1. Post-translationally, the signal sequence is not cleaved.

Its subcellular location is the cytoplasm. The protein localises to the secreted. It localises to the extracellular space. Functionally, inhibits urokinase-type plasminogen activator. The monocyte derived PAI-2 is distinct from the endothelial cell-derived PAI-1. Not required for normal murine development or survival. The protein is Plasminogen activator inhibitor 2, macrophage (Serpinb2) of Mus musculus (Mouse).